The chain runs to 246 residues: Large ribosomal subunit protein uL2 (246 aa).

Positions 196-226 (MSPYAHPHGGGSHQKGGTPVPKTAPPGQKVG) are disordered.

The protein belongs to the universal ribosomal protein uL2 family. As to quaternary structure, part of the 50S ribosomal subunit. Forms a bridge to the 30S subunit in the 70S ribosome.

In terms of biological role, one of the primary rRNA binding proteins. Required for association of the 30S and 50S subunits to form the 70S ribosome, for tRNA binding and peptide bond formation. It has been suggested to have peptidyltransferase activity; this is somewhat controversial. Makes several contacts with the 16S rRNA in the 70S ribosome. In Pyrobaculum arsenaticum (strain DSM 13514 / JCM 11321 / PZ6), this protein is Large ribosomal subunit protein uL2.